Consider the following 619-residue polypeptide: UPF0329 protein ECU08_2070 (619 aa).

Basic and acidic residues-rich tracts occupy residues 350-359 and 369-385; these read EREKREESKG and GAGE…RKEE. The segment at 350 to 425 is disordered; the sequence is EREKREESKG…REKKMGEEHH (76 aa). Residues 386 to 396 show a composition bias toward acidic residues; sequence EGVEVEEEESA.

This sequence belongs to the UPF0329 family.

This is UPF0329 protein ECU08_2070 from Encephalitozoon cuniculi (strain GB-M1) (Microsporidian parasite).